Consider the following 251-residue polypeptide: Transcription factor bHLH144 (251 aa).

3 disordered regions span residues 1 to 20 (MQNN…NMHN), 130 to 161 (YEEN…YGNT), and 173 to 202 (NNNN…RKKM). The span at 9–18 (FSDEVGDRNM) shows a compositional bias: basic and acidic residues. The segment covering 130 to 147 (YEENDDNEGEEDGGDSEE) has biased composition (acidic residues). Positions 148 to 161 (VSTARTSSRDYGNT) are enriched in polar residues. Residues 173 to 192 (NNNNNNNSRKQSLSGSASSS) show a composition bias toward low complexity. The 50-residue stretch at 186-235 (SGSASSSNNDGKGRKKMKKMMGVLRRIVPGGEQMNTACVLDEAVQYLKSL) folds into the bHLH domain.

In terms of assembly, homodimer. Interacts with LHW.

Its subcellular location is the nucleus. The chain is Transcription factor bHLH144 (BHLH144) from Arabidopsis thaliana (Mouse-ear cress).